Consider the following 453-residue polypeptide: Putative F-box/FBD/LRR-repeat protein At1g66290 (453 aa).

The tract at residues 1-28 (MDEDGERRVRTKRSCSPESSDNGSGDEV) is disordered. Positions 14 to 23 (SCSPESSDNG) are enriched in polar residues. An F-box domain is found at 28–81 (VDWISDLPEALIVLVLLNLPTKDVIKTSVLSTKWRNIWRYVPRLDLDNRHFTEF). LRR repeat units lie at residues 155-179 (SLKLSEVTLTKPEFVSLPSLKVLVL), 210-235 (LDNVRVLRVISQSLLSFNYYGSSSKS), 246-269 (APKLEKLKLSHQLTASFIIENLSS), 305-329 (LSRVKTMTIAACTLEVIYDYSRCEP), and 358-381 (CSNLKSLVLESDYFPRKRTSIISE). One can recognise an FBD domain in the interval 373 to 423 (RKRTSIISEPRCLLSSLEYVKIEFALDKGKMELVRYLLENSPILKKLTLSL).

The protein is Putative F-box/FBD/LRR-repeat protein At1g66290 of Arabidopsis thaliana (Mouse-ear cress).